Consider the following 1141-residue polypeptide: DNA-directed RNA polymerase subunit beta (1141 aa).

Acidic residues-rich tracts occupy residues 1063–1074 and 1096–1141; these read EIEIKEDDDDVS and GGNE…GDEE. The interval 1063–1141 is disordered; that stretch reads EIEIKEDDDD…VPDEAYGDEE (79 aa).

Belongs to the RNA polymerase beta chain family. The RNAP catalytic core consists of 2 alpha, 1 beta, 1 beta' and 1 omega subunit. When a sigma factor is associated with the core the holoenzyme is formed, which can initiate transcription.

It carries out the reaction RNA(n) + a ribonucleoside 5'-triphosphate = RNA(n+1) + diphosphate. Functionally, DNA-dependent RNA polymerase catalyzes the transcription of DNA into RNA using the four ribonucleoside triphosphates as substrates. In Moorella thermoacetica (strain ATCC 39073 / JCM 9320), this protein is DNA-directed RNA polymerase subunit beta.